The chain runs to 152 residues: Fused toxin protein (152 aa).

An N-terminal signal peptide occupies residues 1 to 24 (MSSGGLLLLLGFLTLWAELTPVSG). A Pyrrolidone carboxylic acid modification is found at glutamine 25. The 51-residue stretch at 31-81 (CSLPAETGECRGRIPRFYYNSASKQCEQFFYSGCGGNANNFETKDQCHYTC) folds into the BPTI/Kunitz inhibitor domain. Cystine bridges form between cysteine 31–cysteine 81, cysteine 40–cysteine 64, cysteine 56–cysteine 77, cysteine 88–cysteine 115, cysteine 102–cysteine 114, and cysteine 108–cysteine 123. The region spanning 81 to 127 (CVEKPGVCPPRPQQQGQEGKNCENDWKCPGQQKCCRYRGKTECKDAV) is the WAP; atypical domain.

This sequence belongs to the venom Kunitz-type family. In terms of tissue distribution, expressed by the venom gland.

The protein resides in the secreted. This is Fused toxin protein from Sistrurus catenatus edwardsii (Desert massasauga).